Reading from the N-terminus, the 199-residue chain is MNKTNDIDQLIYLFSKLPGLGIRSARRIVLYLLQDKDVRLKSLINHLIELDKKIVKCEICGNLDTKSICHICSSEYRDKSTIAIVETVAELCAMERSGNFKGLYHVLGHNLSAASRQNPRILRLPELLKRCFVENIKEVIIATNSTLEGQTTAYFIIEYLKEHPAKISRLASGIPIGGELDYLDEGTLSAAISLRQPCE.

A C4-type zinc finger spans residues 57-72 (CEICGNLDTKSICHIC). One can recognise a Toprim domain in the interval 80-175 (STIAIVETVA…KISRLASGIP (96 aa)).

The protein belongs to the RecR family.

Its function is as follows. May play a role in DNA repair. It seems to be involved in an RecBC-independent recombinational process of DNA repair. It may act with RecF and RecO. The protein is Recombination protein RecR of Rickettsia prowazekii (strain Madrid E).